Consider the following 134-residue polypeptide: MSVTRGSAGDLRKGSYVILDDEPCEVLEVSKSKPGKHGSAKVRVEARGIFDGARRSKIFPADALVEIPIVDKKTAQVINVYGNVVQLMDLETYETFELPLPEDPELASRLKSGIEVEYWESMGKRKIVRTRGGV.

K36 is subject to Hypusine.

Belongs to the eIF-5A family.

The protein resides in the cytoplasm. Functions by promoting the formation of the first peptide bond. The chain is Translation initiation factor 5A (eIF5A) from Korarchaeum cryptofilum (strain OPF8).